The sequence spans 436 residues: Gamma-glutamyl phosphate reductase (436 aa).

Belongs to the gamma-glutamyl phosphate reductase family.

It is found in the cytoplasm. It carries out the reaction L-glutamate 5-semialdehyde + phosphate + NADP(+) = L-glutamyl 5-phosphate + NADPH + H(+). It functions in the pathway amino-acid biosynthesis; L-proline biosynthesis; L-glutamate 5-semialdehyde from L-glutamate: step 2/2. Functionally, catalyzes the NADPH-dependent reduction of L-glutamate 5-phosphate into L-glutamate 5-semialdehyde and phosphate. The product spontaneously undergoes cyclization to form 1-pyrroline-5-carboxylate. The protein is Gamma-glutamyl phosphate reductase of Polaromonas sp. (strain JS666 / ATCC BAA-500).